Consider the following 438-residue polypeptide: Lipoyl synthase, mitochondrial (438 aa).

A mitochondrion-targeting transit peptide spans 1-31 (MAASARGLRTLQSAHSSTTVPRLQLAVSRCY). Residues 34–57 (TTSPDPPITNSSNSSNSSNSTPTP) are compositionally biased toward low complexity. Residues 34–58 (TTSPDPPITNSSNSSNSSNSTPTPK) form a disordered region. [4Fe-4S] cluster contacts are provided by C148, C153, C159, C179, C183, C186, and S394. Residues 162 to 383 (GSSKSAATAT…KERALEMGFL (222 aa)) enclose the Radical SAM core domain.

The protein belongs to the radical SAM superfamily. Lipoyl synthase family. The cofactor is [4Fe-4S] cluster.

The protein localises to the mitochondrion. It carries out the reaction [[Fe-S] cluster scaffold protein carrying a second [4Fe-4S](2+) cluster] + N(6)-octanoyl-L-lysyl-[protein] + 2 oxidized [2Fe-2S]-[ferredoxin] + 2 S-adenosyl-L-methionine + 4 H(+) = [[Fe-S] cluster scaffold protein] + N(6)-[(R)-dihydrolipoyl]-L-lysyl-[protein] + 4 Fe(3+) + 2 hydrogen sulfide + 2 5'-deoxyadenosine + 2 L-methionine + 2 reduced [2Fe-2S]-[ferredoxin]. It participates in protein modification; protein lipoylation via endogenous pathway; protein N(6)-(lipoyl)lysine from octanoyl-[acyl-carrier-protein]: step 2/2. Its function is as follows. Catalyzes the radical-mediated insertion of two sulfur atoms into the C-6 and C-8 positions of the octanoyl moiety bound to the lipoyl domains of lipoate-dependent enzymes, thereby converting the octanoylated domains into lipoylated derivatives. This chain is Lipoyl synthase, mitochondrial, found in Paracoccidioides brasiliensis (strain Pb18).